Consider the following 65-residue polypeptide: MGVQVDKERCVGAGMCALTAPDVFTQDDDGLSEVLPGREATSGTHPLVGEAVRACPVGAVVLSSD.

A 4Fe-4S ferredoxin-type domain is found at 2 to 29; sequence GVQVDKERCVGAGMCALTAPDVFTQDDD. Residues Cys-10, Cys-16, and Cys-55 each coordinate [3Fe-4S] cluster.

Requires [3Fe-4S] cluster as cofactor.

Functionally, electron transport protein for the cytochrome P-450-SOY system. In Streptomyces griseus, this protein is Ferredoxin soy (soyB).